Consider the following 407-residue polypeptide: BTB/POZ and MATH domain-containing protein 1 (407 aa).

One can recognise an MATH domain in the interval 33-167 (NGFHEFKICG…ENSLLVRCRV (135 aa)). The region spanning 203 to 270 (CDVVFQVDGE…IYWDELPDMQ (68 aa)) is the BTB domain.

It belongs to the Tdpoz family. Homodimer or heterodimer with BPM3, BPM5 and BPM6. Interacts with CUL3A and CUL3B. Interacts with RAP2-4 and RAP2-13. Binds to MYB56 at the promoter of FLOWERING LOCUS T (FT). Ubiquitous.

The protein resides in the nucleus. The protein operates within protein modification; protein ubiquitination. Its function is as follows. May act as a substrate-specific adapter of an E3 ubiquitin-protein ligase complex (CUL3-RBX1-BTB) which mediates the ubiquitination and subsequent proteasomal degradation of target proteins. The polypeptide is BTB/POZ and MATH domain-containing protein 1 (BPM1) (Arabidopsis thaliana (Mouse-ear cress)).